The sequence spans 454 residues: Phosphoglucosamine mutase (454 aa).

The active-site Phosphoserine intermediate is serine 104. Serine 104, aspartate 247, aspartate 249, and aspartate 251 together coordinate Mg(2+). Serine 104 carries the phosphoserine modification.

The protein belongs to the phosphohexose mutase family. Requires Mg(2+) as cofactor. Activated by phosphorylation.

The enzyme catalyses alpha-D-glucosamine 1-phosphate = D-glucosamine 6-phosphate. Catalyzes the conversion of glucosamine-6-phosphate to glucosamine-1-phosphate. The polypeptide is Phosphoglucosamine mutase (Bifidobacterium animalis subsp. lactis (strain AD011)).